Here is a 183-residue protein sequence, read N- to C-terminus: Proton-transporting V-type ATPase complex assembly regulator TMEM9 (183 aa).

The N-terminal stretch at 1–20 (MKLLCLVAVVGCLLVPPAQA) is a signal peptide. Residues Asn-21, Asn-38, and Asn-47 are each glycosylated (N-linked (GlcNAc...) asparagine). Residues 21-89 (NKSSEDIRCK…YEERSTTTIK (69 aa)) lie on the Extracellular side of the membrane. The chain crosses the membrane as a helical span at residues 90–110 (VIIVIYLSVVGALLLYMAFLM). Over 111 to 183 (LVDPLIRKPD…TVFDRHKMLS (73 aa)) the chain is Cytoplasmic. Ser-144 is subject to Phosphoserine.

The protein belongs to the TMEM9 family. In terms of assembly, interacts with the v-ATPase accessory protein ATP6AP2 and with the v-ATPase complex subunit ATP6V0D1; these interactions lead to the assembly of the v-ATPase complex. Post-translationally, N-glycosylated. In terms of tissue distribution, expressed in heart, lung, kidney, liver and intestines. Enriched in the hepatocytes around the central vein.

It is found in the lysosome membrane. Its subcellular location is the late endosome membrane. The protein resides in the endosome. The protein localises to the multivesicular body membrane. Functionally, transmembrane protein that binds to and facilitates the assembly of lysosomal proton-transporting V-type ATPase (v-ATPase), resulting in enhanced lysosomal acidification and trafficking. By bringing the v-ATPase accessory protein ATP6AP2 and the v-ATPase subunit ATP6V0D1 together, allows v-ATPase complex formation and activation. TMEM9-controlled vesicular acidification induces hyperactivation of Wnt/beta-catenin signaling, involved in development, tissue homeostasis and tissue regeneration, through lysosomal degradation of adenomatous polyposis coli/APC. In the liver, involved in hepatic regeneration. In Mus musculus (Mouse), this protein is Proton-transporting V-type ATPase complex assembly regulator TMEM9.